Consider the following 122-residue polypeptide: Basic phospholipase A2 10 (122 aa).

Intrachain disulfides connect Cys26/Cys114, Cys28/Cys43, Cys42/Cys94, Cys48/Cys122, Cys49/Cys87, Cys56/Cys80, and Cys74/Cys85. Residues Tyr27, Gly29, and Gly31 each coordinate Ca(2+). Residue His46 is part of the active site. Asp47 lines the Ca(2+) pocket. Asp88 is a catalytic residue.

Ca(2+) is required as a cofactor. Expressed by the venom gland.

The protein localises to the secreted. It catalyses the reaction a 1,2-diacyl-sn-glycero-3-phosphocholine + H2O = a 1-acyl-sn-glycero-3-phosphocholine + a fatty acid + H(+). Its activity is regulated as follows. Inhibited by chemical modifications mediated by p-BPB, anhydrous acetic acid and NBSF. Snake venom phospholipase A2 (PLA2) that has a strong dose-dependent anticoagulant effect. In vivo, intramuscular and intervenal injection causes muscle necrosis. Induces moderate edema in the mouse foot pad. PLA2 catalyzes the calcium-dependent hydrolysis of the 2-acyl groups in 3-sn-phosphoglycerides. The protein is Basic phospholipase A2 10 of Crotalus durissus cumanensis (South American rattlesnake).